We begin with the raw amino-acid sequence, 740 residues long: MNTQTGTGTSEVSKKLKAAIRAKLEELGVYVDDELPDYIMVMIANKKEKVQMKDDLNLFIGKSTAKFVDWLFDLFDRLQNASNKQGETSKKEEDKRKELEATAAAKEHEEKRRKEKEEHEKELQKEKEREKERQRERDREKRAEEEKRREEKRKEIQRSKRRRTRSRSNTYSDEEEHVRARGEKHDRHHHKDHRRGRSHERKIITSTIVRQASASPDKKLHSTVTVKRNIRPTGDQNIKGRGTMFLRAMNEASVSAGYGSSSKRSETHHEDDMSDVEALPSKPASTKSPKKSIRDRMSRISKTSEPPIEEDDAVVLEDFAQTGGGPQMILKLSGGREAIKKTRIQDRIVVDDGLRRGLLKRKIETASGASAGAATSEEPKSKHDRIIFDITPSRDSTPTDDSPTMQKWNGQIEIGDDSEESEDDEEAEIDAFVAEARGIARRESFRDEEDELPPTHQLSGGPYAYHHSTAAPTYIPTPLSVLSEQQNQMGGGAAKEDHHVKERCIFWPKCTKGDTCAFMHPTTNCKNFPNCTFGIRCLFIHPPCRFDRFCTKKHCPFTHHGTGGQQPGGAQLTSEFKNPLTSSRMLTVPSPFIAATAAAVEELPKPAARGALGSLAEKLAASIKKKPAPGAESEKKEEKSDENESKAEEPKAEVAPVQPKPLPDIAPLHSMVLCRYAGACRNPICHFKHPKECRFGANCRNPSCYFYHKPAGAAPTPVAAPIAAESAGAAKYKWTSATAN.

4 disordered regions span residues 82–240 (SNKQ…NIKG), 254–314 (VSAG…DDAV), 390–426 (ITPS…DDEE), and 444–469 (SFRD…HHST). Basic and acidic residues-rich tracts occupy residues 87 to 158 (ETSK…EIQR) and 176 to 185 (EHVRARGEKH). A compositionally biased stretch (basic residues) spans 186–200 (DRHHHKDHRRGRSHE). Residues 204 to 214 (ITSTIVRQASA) show a composition bias toward polar residues. Positions 393 to 409 (SRDSTPTDDSPTMQKWN) are enriched in polar residues. A compositionally biased stretch (acidic residues) spans 414–426 (IGDDSEESEDDEE). C3H1-type zinc fingers lie at residues 499-522 (HVKE…MHPT) and 523-543 (TNCK…IHPP). The segment at 623–661 (IKKKPAPGAESEKKEEKSDENESKAEEPKAEVAPVQPKP) is disordered. A compositionally biased stretch (basic and acidic residues) spans 632–652 (ESEKKEEKSDENESKAEEPKA). 3 consecutive C3H1-type zinc fingers follow at residues 668-691 (LHSM…KHPK), 674-691 (CRYA…KHPK), and 693-709 (CRFG…FYHK).

This sequence belongs to the ZC3H14 family.

The protein resides in the nucleus. It localises to the cytoplasm. RNA-binding protein involved in the biogenesis of circular RNAs (circRNAs), which are produced by back-splicing circularization of pre-mRNAs. The polypeptide is Zinc finger CCCH domain-containing protein 14 (sut-2) (Caenorhabditis elegans).